Here is a 521-residue protein sequence, read N- to C-terminus: Probable methylmalonate-semialdehyde/malonate-semialdehyde dehydrogenase [acylating], mitochondrial (521 aa).

Ala-170, Phe-172, Lys-196, Glu-199, Arg-200, and Ser-249 together coordinate NAD(+). The active-site Nucleophile is Cys-304. An NAD(+)-binding site is contributed by Glu-404.

It belongs to the aldehyde dehydrogenase family. In terms of assembly, homotetramer.

It is found in the mitochondrion. It catalyses the reaction 2-methyl-3-oxopropanoate + NAD(+) + CoA + H2O = propanoyl-CoA + hydrogencarbonate + NADH + H(+). The enzyme catalyses 3-oxopropanoate + NAD(+) + CoA + H2O = hydrogencarbonate + acetyl-CoA + NADH + H(+). Functionally, probable malonate and methylmalonate semialdehyde dehydrogenase involved in the catabolism of valine, thymine, and compounds catabolized by way of beta-alanine, including uracil and cytidine. This is Probable methylmalonate-semialdehyde/malonate-semialdehyde dehydrogenase [acylating], mitochondrial from Anopheles gambiae (African malaria mosquito).